We begin with the raw amino-acid sequence, 299 residues long: Regucalcin (299 aa).

Glu-18 is a binding site for a divalent metal cation. Substrate contacts are provided by Arg-101, Asn-103, and Glu-121. Residues Asn-154 and Asp-204 each coordinate a divalent metal cation. Asp-204 acts as the Proton donor/acceptor in catalysis.

It belongs to the SMP-30/CGR1 family. Zn(2+) serves as cofactor. Mn(2+) is required as a cofactor. It depends on Ca(2+) as a cofactor. The cofactor is Mg(2+). As to expression, expressed in the liver, and in the pronephros from the late tadpole stage.

It localises to the cytoplasm. It carries out the reaction D-glucono-1,5-lactone + H2O = D-gluconate + H(+). The protein operates within cofactor biosynthesis; L-ascorbate biosynthesis via UDP-alpha-D-glucuronate pathway; L-ascorbate from UDP-alpha-D-glucuronate: step 3/4. In terms of biological role, gluconolactonase with low activity towards other sugar lactones, including gulonolactone and galactonolactone. Catalyzes a key step in ascorbic acid (vitamin C) biosynthesis. Can also hydrolyze diisopropyl phosphorofluoridate and phenylacetate (in vitro). Calcium-binding protein. Modulates Ca(2+) signaling, and Ca(2+)-dependent cellular processes and enzyme activities. This Xenopus laevis (African clawed frog) protein is Regucalcin.